The following is a 290-amino-acid chain: Acetylglutamate kinase (290 aa).

Residues 60-61, Arg82, and Asn187 each bind substrate; that span reads GG.

This sequence belongs to the acetylglutamate kinase family. ArgB subfamily.

It is found in the cytoplasm. It catalyses the reaction N-acetyl-L-glutamate + ATP = N-acetyl-L-glutamyl 5-phosphate + ADP. It functions in the pathway amino-acid biosynthesis; L-arginine biosynthesis; N(2)-acetyl-L-ornithine from L-glutamate: step 2/4. Its function is as follows. Catalyzes the ATP-dependent phosphorylation of N-acetyl-L-glutamate. In Marinobacter nauticus (strain ATCC 700491 / DSM 11845 / VT8) (Marinobacter aquaeolei), this protein is Acetylglutamate kinase.